Here is a 117-residue protein sequence, read N- to C-terminus: uncharacterized protein (117 aa).

Residues 1–24 form the signal peptide; sequence MMTEFGSAMTLVTGLVAYGAYVKS. Residues 42–117 form a disordered region; the sequence is EKENFNYNNN…NNQIKRRLFD (76 aa). The segment covering 46 to 95 has biased composition (low complexity); the sequence is FNYNNNNNNNNNNNNNNSNNNDNNNNNNSNSNNNNNNNNNNNNNNNNNIN. N-linked (GlcNAc...) asparagine glycosylation is found at asparagine 61 and asparagine 72. A compositionally biased stretch (polar residues) spans 96 to 110; that stretch reads DKQINGTNIFDSNNQ.

It localises to the secreted. This is an uncharacterized protein from Dictyostelium discoideum (Social amoeba).